The following is an 80-amino-acid chain: Acyl carrier protein (80 aa).

Residues 4–79 (EDIFSKVKDI…DAVDFIASKA (76 aa)) form the Carrier domain. Ser-39 is subject to O-(pantetheine 4'-phosphoryl)serine.

It belongs to the acyl carrier protein (ACP) family. In terms of processing, 4'-phosphopantetheine is transferred from CoA to a specific serine of apo-ACP by AcpS. This modification is essential for activity because fatty acids are bound in thioester linkage to the sulfhydryl of the prosthetic group.

The protein resides in the cytoplasm. The protein operates within lipid metabolism; fatty acid biosynthesis. In terms of biological role, carrier of the growing fatty acid chain in fatty acid biosynthesis. In Synechococcus elongatus (strain ATCC 33912 / PCC 7942 / FACHB-805) (Anacystis nidulans R2), this protein is Acyl carrier protein.